We begin with the raw amino-acid sequence, 362 residues long: Holliday junction branch migration complex subunit RuvB (362 aa).

The segment at 4–186 is large ATPase domain (RuvB-L); the sequence is PDRPQRLVEQ…FGIPLRMQFY (183 aa). ATP-binding positions include I25, R26, G67, K70, T71, T72, 133–135, R176, Y186, and R223; that span reads EDF. Residue T71 participates in Mg(2+) binding. The interval 187–257 is small ATPAse domain (RuvB-S); sequence EPEELQLIVA…AAGGALTRLE (71 aa). Positions 260-362 are head domain (RuvB-H); sequence RLGFDAMDRR…GTPEGEGEDV (103 aa). DNA-binding residues include R296, R315, and R320.

The protein belongs to the RuvB family. Homohexamer. Forms an RuvA(8)-RuvB(12)-Holliday junction (HJ) complex. HJ DNA is sandwiched between 2 RuvA tetramers; dsDNA enters through RuvA and exits via RuvB. An RuvB hexamer assembles on each DNA strand where it exits the tetramer. Each RuvB hexamer is contacted by two RuvA subunits (via domain III) on 2 adjacent RuvB subunits; this complex drives branch migration. In the full resolvosome a probable DNA-RuvA(4)-RuvB(12)-RuvC(2) complex forms which resolves the HJ.

Its subcellular location is the cytoplasm. It catalyses the reaction ATP + H2O = ADP + phosphate + H(+). Its function is as follows. The RuvA-RuvB-RuvC complex processes Holliday junction (HJ) DNA during genetic recombination and DNA repair, while the RuvA-RuvB complex plays an important role in the rescue of blocked DNA replication forks via replication fork reversal (RFR). RuvA specifically binds to HJ cruciform DNA, conferring on it an open structure. The RuvB hexamer acts as an ATP-dependent pump, pulling dsDNA into and through the RuvAB complex. RuvB forms 2 homohexamers on either side of HJ DNA bound by 1 or 2 RuvA tetramers; 4 subunits per hexamer contact DNA at a time. Coordinated motions by a converter formed by DNA-disengaged RuvB subunits stimulates ATP hydrolysis and nucleotide exchange. Immobilization of the converter enables RuvB to convert the ATP-contained energy into a lever motion, pulling 2 nucleotides of DNA out of the RuvA tetramer per ATP hydrolyzed, thus driving DNA branch migration. The RuvB motors rotate together with the DNA substrate, which together with the progressing nucleotide cycle form the mechanistic basis for DNA recombination by continuous HJ branch migration. Branch migration allows RuvC to scan DNA until it finds its consensus sequence, where it cleaves and resolves cruciform DNA. In Rhodospirillum centenum (strain ATCC 51521 / SW), this protein is Holliday junction branch migration complex subunit RuvB.